Consider the following 326-residue polypeptide: Heat-inducible transcription repressor HrcA (326 aa).

The protein belongs to the HrcA family.

Functionally, negative regulator of class I heat shock genes (grpE-dnaK-dnaJ and groELS operons). Prevents heat-shock induction of these operons. This is Heat-inducible transcription repressor HrcA from Staphylococcus saprophyticus subsp. saprophyticus (strain ATCC 15305 / DSM 20229 / NCIMB 8711 / NCTC 7292 / S-41).